The sequence spans 506 residues: MKFSQWYTLTAPLLISSLYTVNAANDLRGVASDKSDLYKPDAKGNWKCLGSDKLISFNQVNDDYCDCPDGSDEPGTSACHNGKFFCKNTGYISSYIPSNRVDDTVCDCCDGSDESLIKCPNTCAQKAREYLATLEEHNRLVKNGLKIREQWALESAKKTDEVKARYKEISDSLVAVSAEKTQLSEKVEKMKRSTDLGAEAVLPLDFQDLRVALLSLVDERNEMQERLDILTNLLDELTLLYETDKFDETMKEAILSFEDLKEQEIRRKVSSDDVHNYLESCNNHLSMLTGPSEDITFSSLIKDIKKILNSLVWNIKLSLINFGILSPSASSTPLTDSESYRRFEAAQRDLDAAEENEKSLEKEHTKLMHELEYHHGWDLYRAIKGMETKREIGGYTYKVVFYENVFQDSILLGNFASQEGNVLKYENGQSCWNGPHRSAIVTVECGVENEIVSVLEAQKCEYLIKMKSPAACSPDQLKQSLLNTQNSANENAVNGMEDKESSVDEL.

A signal peptide spans 1 to 23 (MKFSQWYTLTAPLLISSLYTVNA). An intrachain disulfide couples cysteine 86 to cysteine 108. 2 coiled-coil regions span residues 172 to 243 (SLVA…LYET) and 338 to 374 (ESYRRFEAAQRDLDAAEENEKSLEKEHTKLMHELEYH). Residues 279 to 474 (ESCNNHLSML…KMKSPAACSP (196 aa)) form the MRH domain. 2 disulfides stabilise this stretch: cysteine 431/cysteine 460 and cysteine 445/cysteine 472. The ER retrieval sequence signature appears at 503-506 (VDEL).

Heterodimer of a catalytic subunit alpha (gls2) and a subunit beta (gtb1).

Its subcellular location is the endoplasmic reticulum. Subunit of glucosidase 2, which cleaves sequentially the 2 innermost alpha-1,3-linked glucose residues from the Glc(2)Man(9)GlcNAc(2) oligosaccharide precursor of immature glycoproteins in the endoplasmic reticulum (ER). Specifically required for the cleavage of the final glucose. The subunit beta retains the catalytic subunit alpha in the ER. The chain is Glucosidase 2 subunit beta (gtb1) from Schizosaccharomyces pombe (strain 972 / ATCC 24843) (Fission yeast).